The chain runs to 245 residues: 4-hydroxy-tetrahydrodipicolinate reductase (245 aa).

NAD(+) contacts are provided by residues 7–12 (GAKGKV), 75–77 (GTT), and 102–105 (APNF). H132 acts as the Proton donor/acceptor in catalysis. H133 lines the (S)-2,3,4,5-tetrahydrodipicolinate pocket. Catalysis depends on K136, which acts as the Proton donor. Residue 142 to 143 (GT) coordinates (S)-2,3,4,5-tetrahydrodipicolinate.

Belongs to the DapB family.

The protein resides in the cytoplasm. The catalysed reaction is (S)-2,3,4,5-tetrahydrodipicolinate + NAD(+) + H2O = (2S,4S)-4-hydroxy-2,3,4,5-tetrahydrodipicolinate + NADH + H(+). It catalyses the reaction (S)-2,3,4,5-tetrahydrodipicolinate + NADP(+) + H2O = (2S,4S)-4-hydroxy-2,3,4,5-tetrahydrodipicolinate + NADPH + H(+). Its pathway is amino-acid biosynthesis; L-lysine biosynthesis via DAP pathway; (S)-tetrahydrodipicolinate from L-aspartate: step 4/4. Catalyzes the conversion of 4-hydroxy-tetrahydrodipicolinate (HTPA) to tetrahydrodipicolinate. This is 4-hydroxy-tetrahydrodipicolinate reductase from Mycolicibacterium gilvum (strain PYR-GCK) (Mycobacterium gilvum (strain PYR-GCK)).